The sequence spans 330 residues: Anthranilate phosphoribosyltransferase (330 aa).

Residues Gly-75, 78–79, Thr-83, 85–88, 103–111, and Ala-115 contribute to the 5-phospho-alpha-D-ribose 1-diphosphate site; these read GD, NVST, and KHGNRAASS. Position 75 (Gly-75) interacts with anthranilate. A Mg(2+)-binding site is contributed by Ser-87. Asn-106 serves as a coordination point for anthranilate. Arg-161 serves as a coordination point for anthranilate. Mg(2+) contacts are provided by Asp-220 and Glu-221.

The protein belongs to the anthranilate phosphoribosyltransferase family. As to quaternary structure, homodimer. Requires Mg(2+) as cofactor.

It carries out the reaction N-(5-phospho-beta-D-ribosyl)anthranilate + diphosphate = 5-phospho-alpha-D-ribose 1-diphosphate + anthranilate. The protein operates within amino-acid biosynthesis; L-tryptophan biosynthesis; L-tryptophan from chorismate: step 2/5. In terms of biological role, catalyzes the transfer of the phosphoribosyl group of 5-phosphorylribose-1-pyrophosphate (PRPP) to anthranilate to yield N-(5'-phosphoribosyl)-anthranilate (PRA). In Novosphingobium aromaticivorans (strain ATCC 700278 / DSM 12444 / CCUG 56034 / CIP 105152 / NBRC 16084 / F199), this protein is Anthranilate phosphoribosyltransferase.